A 130-amino-acid chain; its full sequence is Large ribosomal subunit protein eL32 (130 aa).

Belongs to the eukaryotic ribosomal protein eL32 family.

In Pyrococcus abyssi (strain GE5 / Orsay), this protein is Large ribosomal subunit protein eL32 (rpl32e).